The primary structure comprises 287 residues: Ribosomal RNA small subunit methyltransferase A (287 aa).

The S-adenosyl-L-methionine site is built by asparagine 35, valine 37, glycine 62, glutamate 83, aspartate 113, and asparagine 131.

It belongs to the class I-like SAM-binding methyltransferase superfamily. rRNA adenine N(6)-methyltransferase family. RsmA subfamily.

The protein resides in the cytoplasm. The enzyme catalyses adenosine(1518)/adenosine(1519) in 16S rRNA + 4 S-adenosyl-L-methionine = N(6)-dimethyladenosine(1518)/N(6)-dimethyladenosine(1519) in 16S rRNA + 4 S-adenosyl-L-homocysteine + 4 H(+). Functionally, specifically dimethylates two adjacent adenosines (A1518 and A1519) in the loop of a conserved hairpin near the 3'-end of 16S rRNA in the 30S particle. May play a critical role in biogenesis of 30S subunits. The polypeptide is Ribosomal RNA small subunit methyltransferase A (Thermobifida fusca (strain YX)).